The chain runs to 207 residues: Large ribosomal subunit protein uL4 (207 aa).

Positions 48–70 (KAQKTRSEVSGGGAKPWRQKGTG) are disordered.

It belongs to the universal ribosomal protein uL4 family. Part of the 50S ribosomal subunit.

One of the primary rRNA binding proteins, this protein initially binds near the 5'-end of the 23S rRNA. It is important during the early stages of 50S assembly. It makes multiple contacts with different domains of the 23S rRNA in the assembled 50S subunit and ribosome. In terms of biological role, forms part of the polypeptide exit tunnel. In Francisella philomiragia subsp. philomiragia (strain ATCC 25017 / CCUG 19701 / FSC 153 / O#319-036), this protein is Large ribosomal subunit protein uL4.